The primary structure comprises 245 residues: Mitochondrial import inner membrane translocase subunit Tim21 (245 aa).

A mitochondrion-targeting transit peptide spans 1–18 (MICAFLRVVRHAEKLHGS). Residues 64–97 (FWTQGPDPRKAKEDSSKQVSINRNQREETGVSTS) are disordered. The segment covering 70-79 (DPRKAKEDSS) has biased composition (basic and acidic residues). Residues 108–128 (TYLIVVLFGVSITGSLLYTIF) traverse the membrane as a helical segment.

Belongs to the TIM21 family. As to quaternary structure, component of the TIM23 complex. Component of the MITRAC (mitochondrial translation regulation assembly intermediate of cytochrome c oxidase complex) complex, the core components of this complex being COA3/MITRAC12 and COX14. Interacts with COA3 and MT-CO1/COX1.

Its subcellular location is the mitochondrion membrane. Its function is as follows. Participates in the translocation of transit peptide-containing proteins across the mitochondrial inner membrane. Also required for assembly of mitochondrial respiratory chain complex I and complex IV as component of the MITRAC (mitochondrial translation regulation assembly intermediate of cytochrome c oxidase complex) complex. Probably shuttles between the presequence translocase and respiratory-chain assembly intermediates in a process that promotes incorporation of early nuclear-encoded subunits into these complexes. This Rattus norvegicus (Rat) protein is Mitochondrial import inner membrane translocase subunit Tim21 (Timm21).